The following is an 815-amino-acid chain: SNF1 protein kinase subunit beta-1 (815 aa).

The span at 1-11 shows a compositional bias: polar residues; sequence MGNSPSTQDPS. Disordered regions lie at residues 1 to 88 and 117 to 148; these read MGNS…TIDK and SDDH…KQTK. Residue glycine 2 is the site of N-myristoyl glycine attachment. Residues 12-31 show a composition bias toward basic and acidic residues; it reads HSTKKEHGHHFHDAFNKDRQ. Over residues 32–42 the composition is skewed to polar residues; the sequence is GSITSQLFNNR. Serine 33 is modified (phosphoserine). Basic and acidic residues-rich tracts occupy residues 72-88 and 117-129; these read PSTD…TIDK and SDDH…EEQV. Phosphoserine is present on residues serine 181, serine 198, serine 200, serine 206, serine 209, and serine 220. Disordered stretches follow at residues 310–335, 363–389, and 410–444; these read SHAN…NDDF, HQNK…FASL, and PLHP…SSIS. The segment covering 313-326 has biased composition (low complexity); sequence NNNGNIENNTRNKG. The residue at position 331 (serine 331) is a Phosphoserine. The segment covering 363 to 376 has biased composition (basic residues); that stretch reads HQNKTKKAQNKKIR. Low complexity-rich tracts occupy residues 377 to 389 and 433 to 444; these read SASN…FASL and HSNSMSSMSSIS. The tract at residues 473–716 is kinase-interacting sequence (KIS); required for interaction with SNF1; the sequence is VSTDIASALK…LQQGGNIDAE (244 aa). Phosphoserine occurs at positions 494 and 497. The disordered stretch occupies residues 583–616; sequence TLDEELPKRPELKRFPSSSRKSSYYSAKGVERPS. The segment covering 587–596 has biased composition (basic and acidic residues); the sequence is ELPKRPELKR. Residues 599 to 608 show a composition bias toward low complexity; that stretch reads SSSRKSSYYS. At serine 643 the chain carries Phosphoserine. Positions 724-804 are association with SNF1 kinase complex (ASC) domain; required for interaction with SNF4; sequence SRYPVPDLPI…FITQVVYAPC (81 aa).

This sequence belongs to the 5'-AMP-activated protein kinase beta subunit family. As to quaternary structure, component of the SNF1 kinase complex, a heterotrimeric complex composed of the catalytic alpha subunit SNF1, one of the three related beta subunits SIP1, SIP2 or GAL83, and the regulatory gamma subunit SNF4. The beta subunit serves as a bridge between the catalytic and the regulatory subunit. Interacts (via KIS domain) with SNF1. Interacts (via ASC domain) with SNF4. Post-translationally, phosphorylated by SNF1 in vitro.

Its subcellular location is the cytoplasm. The protein localises to the vacuole membrane. In terms of biological role, beta subunit of the SNF1 kinase complex, which is required for transcriptional, metabolic, and developmental adaptations in response to glucose limitation. Has a structural role, mediating heterotrimer formation, and a regulatory role, defining carbon source-regulated subcellular location and substrate specificity of the SNF1 kinase complex. Promotes the PKA-regulated relocalization of the SNF1 kinase complex to the vacuolar membrane in response to various types of carbon stress. The sequence is that of SNF1 protein kinase subunit beta-1 (SIP1) from Saccharomyces cerevisiae (strain YJM789) (Baker's yeast).